Consider the following 483-residue polypeptide: UDP-N-acetylmuramoylalanine--D-glutamate ligase (483 aa).

Residue 119-125 (GTNGKTT) participates in ATP binding.

It belongs to the MurCDEF family.

It localises to the cytoplasm. The enzyme catalyses UDP-N-acetyl-alpha-D-muramoyl-L-alanine + D-glutamate + ATP = UDP-N-acetyl-alpha-D-muramoyl-L-alanyl-D-glutamate + ADP + phosphate + H(+). It functions in the pathway cell wall biogenesis; peptidoglycan biosynthesis. Cell wall formation. Catalyzes the addition of glutamate to the nucleotide precursor UDP-N-acetylmuramoyl-L-alanine (UMA). In Mycolicibacterium vanbaalenii (strain DSM 7251 / JCM 13017 / BCRC 16820 / KCTC 9966 / NRRL B-24157 / PYR-1) (Mycobacterium vanbaalenii), this protein is UDP-N-acetylmuramoylalanine--D-glutamate ligase.